The sequence spans 448 residues: Methylenetetrahydrofolate--tRNA-(uracil-5-)-methyltransferase TrmFO (448 aa).

Residue 10 to 15 (GAGLAG) coordinates FAD.

Belongs to the MnmG family. TrmFO subfamily. It depends on FAD as a cofactor.

The protein resides in the cytoplasm. It carries out the reaction uridine(54) in tRNA + (6R)-5,10-methylene-5,6,7,8-tetrahydrofolate + NADH + H(+) = 5-methyluridine(54) in tRNA + (6S)-5,6,7,8-tetrahydrofolate + NAD(+). The enzyme catalyses uridine(54) in tRNA + (6R)-5,10-methylene-5,6,7,8-tetrahydrofolate + NADPH + H(+) = 5-methyluridine(54) in tRNA + (6S)-5,6,7,8-tetrahydrofolate + NADP(+). Functionally, catalyzes the folate-dependent formation of 5-methyl-uridine at position 54 (M-5-U54) in all tRNAs. In Lactococcus lactis subsp. cremoris (strain MG1363), this protein is Methylenetetrahydrofolate--tRNA-(uracil-5-)-methyltransferase TrmFO.